A 572-amino-acid chain; its full sequence is Probable terpene synthase 13 (572 aa).

The Mg(2+) site is built by Asp326, Asp330, and Glu478. The DDXXD motif motif lies at 326-330 (DDIFD).

Belongs to the terpene synthase family. The cofactor is Mg(2+).

In terms of biological role, probable sesquiterpene synthase. The sequence is that of Probable terpene synthase 13 (TPS13) from Ricinus communis (Castor bean).